A 148-amino-acid polypeptide reads, in one-letter code: Lysozyme C-2 (148 aa).

Residues 1 to 18 form the signal peptide; it reads MKTLLTLGLLLLSVTAQA. In terms of domain architecture, C-type lysozyme spans 19–148; the sequence is KVYERCEFAR…LSQYIRNCGV (130 aa). 4 cysteine pairs are disulfide-bonded: C24–C146, C48–C134, C83–C99, and C95–C113. Active-site residues include E53 and D71.

It belongs to the glycosyl hydrolase 22 family. In terms of assembly, monomer. In terms of tissue distribution, expressed weakly in myeloblasts, moderately in immature macrophages, and strongly in both mature macrophages and macrophage-rich tissues.

Its subcellular location is the secreted. It catalyses the reaction Hydrolysis of (1-&gt;4)-beta-linkages between N-acetylmuramic acid and N-acetyl-D-glucosamine residues in a peptidoglycan and between N-acetyl-D-glucosamine residues in chitodextrins.. In terms of biological role, lysozymes have primarily a bacteriolytic function; those in tissues and body fluids are associated with the monocyte-macrophage system and enhance the activity of immunoagents. Lyz2 is active against a range of Gram-positive and Gram-negative bacteria. More effective than Lyz1 in killing Gram-negative bacteria. Lyz1 and Lyz2 are equally effective in killing Gram-positive bacteria. This Mus musculus (Mouse) protein is Lysozyme C-2 (Lyz2).